Consider the following 311-residue polypeptide: Ribosomal RNA small subunit methyltransferase H (311 aa).

S-adenosyl-L-methionine-binding positions include 32 to 34, aspartate 52, phenylalanine 79, aspartate 100, and glutamine 107; that span reads AGH.

The protein belongs to the methyltransferase superfamily. RsmH family.

It localises to the cytoplasm. It carries out the reaction cytidine(1402) in 16S rRNA + S-adenosyl-L-methionine = N(4)-methylcytidine(1402) in 16S rRNA + S-adenosyl-L-homocysteine + H(+). In terms of biological role, specifically methylates the N4 position of cytidine in position 1402 (C1402) of 16S rRNA. The chain is Ribosomal RNA small subunit methyltransferase H from Staphylococcus aureus (strain COL).